Here is a 526-residue protein sequence, read N- to C-terminus: ATP synthase subunit alpha (526 aa).

Position 171–178 (171–178) interacts with ATP; that stretch reads GDRQTGKT.

This sequence belongs to the ATPase alpha/beta chains family. As to quaternary structure, F-type ATPases have 2 components, CF(1) - the catalytic core - and CF(0) - the membrane proton channel. CF(1) has five subunits: alpha(3), beta(3), gamma(1), delta(1), epsilon(1). CF(0) has three main subunits: a(1), b(2) and c(9-12). The alpha and beta chains form an alternating ring which encloses part of the gamma chain. CF(1) is attached to CF(0) by a central stalk formed by the gamma and epsilon chains, while a peripheral stalk is formed by the delta and b chains.

Its subcellular location is the cell inner membrane. It carries out the reaction ATP + H2O + 4 H(+)(in) = ADP + phosphate + 5 H(+)(out). In terms of biological role, produces ATP from ADP in the presence of a proton gradient across the membrane. The alpha chain is a regulatory subunit. In Cytophaga hutchinsonii (strain ATCC 33406 / DSM 1761 / CIP 103989 / NBRC 15051 / NCIMB 9469 / D465), this protein is ATP synthase subunit alpha.